The chain runs to 248 residues: MAGHSKWANIQHRKGKQDKLRSKMFSKLAKEITVAAKMGDPDPDKNPRLRLAVKAAKAVSMPKDVIERAIKKSQGGDAEDYSEIRYEGYGPNGIAIIVETMTDNVNRTASNVRSYFTKFGGNLGTTGSVSFMFDRVGEITYKPAAGDADTVMMAAIEAGADDVESDEDGHWIYCGDTSLNEVSEALEKVLGESEEAKLVWKPQNRTNVDLETAQKLMKLIDALEEDDDVQTVTANFDIPEDVAARLDA.

A disordered region spans residues 1 to 21 (MAGHSKWANIQHRKGKQDKLR).

The protein belongs to the TACO1 family.

The protein resides in the cytoplasm. The polypeptide is Probable transcriptional regulatory protein Rsph17025_0577 (Cereibacter sphaeroides (strain ATCC 17025 / ATH 2.4.3) (Rhodobacter sphaeroides)).